The following is a 456-amino-acid chain: Chordin-like protein 1 (456 aa).

Positions Met1–Leu28 are cleaved as a signal peptide. 3 consecutive VWFC domains span residues Thr36–Pro101, Lys115–Arg181, and Arg262–Pro327. Residue Asn120 is glycosylated (N-linked (GlcNAc...) asparagine). The short motif at Arg181–Asp183 is the Cell attachment site element. An N-linked (GlcNAc...) asparagine glycan is attached at Asn295.

In terms of tissue distribution, mainly expressed in the ventral retina.

It localises to the secreted. Seems to antagonize the function of BMP4 by binding to it and preventing its interaction with receptors. The sequence is that of Chordin-like protein 1 (CHRDL1) from Gallus gallus (Chicken).